We begin with the raw amino-acid sequence, 160 residues long: SsrA-binding protein (160 aa).

This sequence belongs to the SmpB family.

The protein resides in the cytoplasm. In terms of biological role, required for rescue of stalled ribosomes mediated by trans-translation. Binds to transfer-messenger RNA (tmRNA), required for stable association of tmRNA with ribosomes. tmRNA and SmpB together mimic tRNA shape, replacing the anticodon stem-loop with SmpB. tmRNA is encoded by the ssrA gene; the 2 termini fold to resemble tRNA(Ala) and it encodes a 'tag peptide', a short internal open reading frame. During trans-translation Ala-aminoacylated tmRNA acts like a tRNA, entering the A-site of stalled ribosomes, displacing the stalled mRNA. The ribosome then switches to translate the ORF on the tmRNA; the nascent peptide is terminated with the 'tag peptide' encoded by the tmRNA and targeted for degradation. The ribosome is freed to recommence translation, which seems to be the essential function of trans-translation. The chain is SsrA-binding protein from Klebsiella pneumoniae (strain 342).